Here is a 161-residue protein sequence, read N- to C-terminus: Epididymal protein 13 (161 aa).

The first 23 residues, 1 to 23 (MHRSEPFLKMSLLILLFLGLAEA), serve as a signal peptide directing secretion. Asn-56 carries N-linked (GlcNAc...) asparagine glycosylation.

The protein localises to the secreted. In Homo sapiens (Human), this protein is Epididymal protein 13.